The following is a 1002-amino-acid chain: Isoleucine--tRNA ligase, mitochondrial (1002 aa).

A 'HIGH' region motif is present at residues 94-104 (PYANGELHLGH). The short motif at 668–672 (KMSKS) is the 'KMSKS' region element. Residue Lys-671 participates in ATP binding.

Belongs to the class-I aminoacyl-tRNA synthetase family.

The protein resides in the mitochondrion matrix. It catalyses the reaction tRNA(Ile) + L-isoleucine + ATP = L-isoleucyl-tRNA(Ile) + AMP + diphosphate. The chain is Isoleucine--tRNA ligase, mitochondrial (ISM1) from Saccharomyces cerevisiae (strain ATCC 204508 / S288c) (Baker's yeast).